The chain runs to 1013 residues: Tolloid-like protein 1 (1013 aa).

A signal peptide spans 1-30 (MGLQALSPRMLLWLVVSGIVFSRVLWVCAG). The propeptide occupies 31-147 (LDYDYTFDGN…EQSEKNRVPR (117 aa)). Positions 124-150 (QNNTMKGKAPPKLSEQSEKNRVPRAAT) are disordered. The Peptidase M12A domain occupies 148-347 (AATSRTERIW…AQARKLYRCP (200 aa)). N169 carries N-linked (GlcNAc...) asparagine glycosylation. 4 disulfide bridges follow: C190–C346, C210–C232, C212–C213, and C349–C375. Position 240 (H240) interacts with Zn(2+). E241 is an active-site residue. The Zn(2+) site is built by H244 and H250. 2 CUB domains span residues 349 to 461 (CGET…YEAI) and 462 to 574 (CGGE…FFKE). N-linked (GlcNAc...) asparagine glycans are attached at residues N359 and N390. Intrachain disulfides connect C402/C424, C462/C488, C515/C537, C578/C590, C586/C599, C601/C614, C618/C644, C671/C693, C734/C745, C741/C754, C756/C769, C774/C800, C827/C849, C887/C917, and C944/C966. Positions 574-615 (EEDECAKPDRGGCEQRCLNTLGSYQCACEPGYELGPDRRSCE) constitute an EGF-like 1; calcium-binding domain. One can recognise a CUB 3 domain in the interval 618-730 (CGGLLTKLNG…KGFKAHFFSD (113 aa)). N626 carries N-linked (GlcNAc...) asparagine glycosylation. The EGF-like 2; calcium-binding domain occupies 730–770 (DKDECSKDNGGCQHECVNTMGSYTCQCRNGFVLHENKHDCK). CUB domains are found at residues 774–886 (CEQK…HSTE) and 887–1003 (CGGR…YKSI).

Zn(2+) serves as cofactor. In terms of tissue distribution, highly expressed in brain and kidney and weakly in lung, skeletal muscle. A perceptible level of expression is observed in heart and testis.

The protein localises to the secreted. In terms of biological role, protease which processes procollagen C-propeptides, such as chordin, pro-biglycan and pro-lysyl oxidase. Required for the embryonic development, especially heart development. Predominant protease, which in the development, influences dorsal-ventral patterning and skeletogenesis. The sequence is that of Tolloid-like protein 1 (Tll1) from Mus musculus (Mouse).